The following is a 37-amino-acid chain: FAIGAIIKKFGKKLVEYAVKHKDLYAPYIKKHLCEKL.

The protein belongs to the ectatomin family. Ectatomin-Eq subfamily. As to quaternary structure, heterodimer of subunits A and B; disulfide-linked. In terms of tissue distribution, expressed by the venom gland.

Its subcellular location is the secreted. It localises to the target cell membrane. The sequence is that of U1-ectatotoxin-Eb1a subunit B from Ectatomma brunneum (Ant).